Consider the following 631-residue polypeptide: Probable potassium transport system protein Kup (631 aa).

12 consecutive transmembrane segments (helical) span residues 17–37, 56–76, 109–129, 147–167, 174–194, 215–235, 256–276, 288–308, 346–366, 378–398, 403–423, and 428–448; these read IGLL…SPLY, ILGV…FKYM, MMMV…SMIT, GLDH…FLIQ, IGVL…ALGV, FFII…LALT, WFIL…ALVL, LLAP…ATII, IYIG…VIGF, VAVT…MLML, PLLA…FFAA, and IFQG…LMTT.

Belongs to the HAK/KUP transporter (TC 2.A.72) family.

It localises to the cell inner membrane. The enzyme catalyses K(+)(in) + H(+)(in) = K(+)(out) + H(+)(out). In terms of biological role, transport of potassium into the cell. Likely operates as a K(+):H(+) symporter. In Pseudomonas syringae pv. tomato (strain ATCC BAA-871 / DC3000), this protein is Probable potassium transport system protein Kup.